Consider the following 1081-residue polypeptide: Zinc finger protein 827 (1081 aa).

The span at 1 to 10 (MPRRKQEQPK) shows a compositional bias: basic and acidic residues. The segment at 1–14 (MPRRKQEQPKRLPS) is mediates direct interaction with RBBP4. The interval 1–77 (MPRRKQEQPK…DTSLGSTTPS (77 aa)) is disordered. Positions 3–5 (RRK) match the RRK motif; mediates NuRD recruitment to telomeres motif. Over residues 62–77 (EQSTSPDTSLGSTTPS) the composition is skewed to polar residues. Residues K176, K216, and K226 each participate in a glycyl lysine isopeptide (Lys-Gly) (interchain with G-Cter in SUMO2) cross-link. 2 disordered regions span residues 258–280 (KKVS…SFLS) and 305–348 (EKSS…SLEL). A compositionally biased stretch (pro residues) spans 327-344 (VSPPPPPPPPPPPPPPPQ). Glycyl lysine isopeptide (Lys-Gly) (interchain with G-Cter in SUMO2) cross-links involve residues K360 and K372. 3 consecutive C2H2-type zinc fingers follow at residues 374–396 (FQCP…MVIH), 402–424 (HQCP…MKVH), and 433–455 (FQCQ…MRCH). Residues K466, K475, K523, K549, K580, K587, and K597 each participate in a glycyl lysine isopeptide (Lys-Gly) (interchain with G-Cter in SUMO2) cross-link. The segment at 525–553 (EPKEDNGLPTSFTLNTADRPANHTKLKDP) is disordered. Positions 616–627 (VFSPESEVSTPG) are enriched in polar residues. The tract at residues 616–640 (VFSPESEVSTPGVSEDALKPQEGKG) is disordered. The span at 631-640 (DALKPQEGKG) shows a compositional bias: basic and acidic residues. Glycyl lysine isopeptide (Lys-Gly) (interchain with G-Cter in SUMO2) cross-links involve residues K634, K639, and K658. K673 participates in a covalent cross-link: Glycyl lysine isopeptide (Lys-Gly) (interchain with G-Cter in SUMO1); alternate. K673 participates in a covalent cross-link: Glycyl lysine isopeptide (Lys-Gly) (interchain with G-Cter in SUMO2); alternate. Glycyl lysine isopeptide (Lys-Gly) (interchain with G-Cter in SUMO2) cross-links involve residues K704, K710, K742, K778, and K798. 2 C2H2-type zinc fingers span residues 817 to 839 (FPCD…LSLH) and 845 to 867 (YKCH…LTVH). Glycyl lysine isopeptide (Lys-Gly) (interchain with G-Cter in SUMO2) cross-links involve residues K870 and K891. 2 consecutive C2H2-type zinc fingers follow at residues 897–919 (YSCH…MSLH) and 929–952 (ICCT…GTKH). Over residues 947–960 (HIGTKHTGEDRKTP) the composition is skewed to basic and acidic residues. The interval 947-1013 (HIGTKHTGED…GSQPSLNSEE (67 aa)) is disordered. K958 is covalently cross-linked (Glycyl lysine isopeptide (Lys-Gly) (interchain with G-Cter in SUMO2)). Residues 961–978 (SESNSPSSSSLSALSDSA) are compositionally biased toward low complexity. The span at 979-988 (NSKDDSDGSQ) shows a compositional bias: basic and acidic residues. K1014 is covalently cross-linked (Glycyl lysine isopeptide (Lys-Gly) (interchain with G-Cter in SUMO2)). 2 consecutive C2H2-type zinc fingers follow at residues 1019-1041 (FECV…LQIH) and 1047-1069 (FECD…KKCH).

It belongs to the krueppel C2H2-type zinc-finger protein family. As to quaternary structure, part of a transcription inhibitory ribonucleoprotein complex composed at least of the circular RNA circZNF827, HNRNPK and HNRNPL. Interacts with the nucleosome remodeling and histone deacetylase/NuRD complex. Interacts with RBBP4; the interaction is direct and recruits RBBP4, a component of the NuRD complex, to telomeres.

Its subcellular location is the nucleus. The protein localises to the chromosome. It localises to the telomere. Its function is as follows. As part of a ribonucleoprotein complex composed at least of HNRNPK, HNRNPL and the circular RNA circZNF827 that nucleates the complex on chromatin, may negatively regulate the transcription of genes involved in neuronal differentiation. Could also recruit the nucleosome remodeling and histone deacetylase/NuRD complex to telomeric regions of chromosomes to regulate chromatin remodeling as part of telomere maintenance. This chain is Zinc finger protein 827 (ZNF827), found in Macaca fascicularis (Crab-eating macaque).